Consider the following 601-residue polypeptide: Tripeptidyl-peptidase SED4 (601 aa).

An N-terminal signal peptide occupies residues 1–22; the sequence is MVSFTLRAIGACLVSLPALVTA. The propeptide at 23 to 202 is removed in mature form; the sequence is APTSHISGDF…SVFTSDLEIT (180 aa). N210 and N281 each carry an N-linked (GlcNAc...) asparagine glycan. The Peptidase S53 domain occupies 212-601; sequence TITPDCIRDL…ETLSKLVLQY (390 aa). Active-site charge relay system residues include E288 and D292. Residue N323 is glycosylated (N-linked (GlcNAc...) asparagine). S504 acts as the Charge relay system in catalysis. Ca(2+) contacts are provided by D546 and I547. An N-linked (GlcNAc...) asparagine glycan is attached at N575. Positions 579 and 581 each coordinate Ca(2+).

It depends on Ca(2+) as a cofactor.

The protein localises to the secreted. The protein resides in the extracellular space. The catalysed reaction is Release of an N-terminal tripeptide from a polypeptide.. Functionally, secreted tripeptidyl-peptidase which degrades proteins at acidic pHs and is involved in virulence. The polypeptide is Tripeptidyl-peptidase SED4 (SED4) (Arthroderma otae (strain ATCC MYA-4605 / CBS 113480) (Microsporum canis)).